The sequence spans 148 residues: 15 kDa excretory/secretory protein (148 aa).

Residues Met-1–Gly-19 form the signal peptide.

This sequence to T.colubriformis 30 kDa antigenic glycoprotein.

Its subcellular location is the secreted. The polypeptide is 15 kDa excretory/secretory protein (Haemonchus contortus (Barber pole worm)).